The primary structure comprises 966 residues: Leucine--tRNA ligase (966 aa).

The short motif at 41-51 (PYLNGNLHAGH) is the 'HIGH' region element. The 'KMSKS' region signature appears at 632-636 (KMSKS). Lys635 is a binding site for ATP.

Belongs to the class-I aminoacyl-tRNA synthetase family.

Its subcellular location is the cytoplasm. It catalyses the reaction tRNA(Leu) + L-leucine + ATP = L-leucyl-tRNA(Leu) + AMP + diphosphate. This chain is Leucine--tRNA ligase, found in Methanosarcina barkeri (strain Fusaro / DSM 804).